The chain runs to 353 residues: Rhodopsin (353 aa).

Residues 1–36 (MNGTEGPFFYVPMLNTTGIVRSPYDYPQYYLVNPAA) are Extracellular-facing. N-linked (GlcNAc...) asparagine glycans are attached at residues Asn2 and Asn15. The helical transmembrane segment at 37–61 (YAALGAYMFLLILLGFPINFLTLYV) threads the bilayer. At 62–73 (TIEHKKLRTPLN) the chain is on the cytoplasmic side. A helical transmembrane segment spans residues 74-96 (YILLNLAVANLFMVFGGFTTTMY). Topologically, residues 97-110 (TSMHGYFVLGRLGC) are extracellular. A disulfide bridge connects residues Cys110 and Cys187. The chain crosses the membrane as a helical span at residues 111-133 (NLEGFFATLGGEIGLWSLVVLAI). The short motif at 134–136 (ERW) is the 'Ionic lock' involved in activated form stabilization element. Topologically, residues 134–152 (ERWMVVCKPISNFRFGENH) are cytoplasmic. The chain crosses the membrane as a helical span at residues 153–173 (AIMGLAFTWIMACACAVPPLV). At 174-202 (GWSRYIPEGMQCSCGVDYYTRAEGFNNES) the chain is on the extracellular side. Asn200 carries an N-linked (GlcNAc...) asparagine glycan. The chain crosses the membrane as a helical span at residues 203–224 (FVVYMFICHFLIPMAVVFFCYG). The Cytoplasmic segment spans residues 225–252 (RLLCAVKEAAAAQQESETTQRAEREVTR). A helical transmembrane segment spans residues 253-274 (MVVIMVVAFLICWLPYAGVAWW). The Extracellular segment spans residues 275–286 (IFTHQGSEFGPV). The chain crosses the membrane as a helical span at residues 287 to 308 (FMTIPAFFAKSSSIYNPLIYIC). An N6-(retinylidene)lysine modification is found at Lys296. The Cytoplasmic portion of the chain corresponds to 309 to 353 (MNKQFRHCMITTLCCGKNPFEEEEGASTTSKTEASSVSSSSVSPA). S-palmitoyl cysteine attachment occurs at residues Cys322 and Cys323. The segment at 330–353 (EEEGASTTSKTEASSVSSSSVSPA) is disordered. Residues 334–353 (ASTTSKTEASSVSSSSVSPA) are compositionally biased toward low complexity.

Belongs to the G-protein coupled receptor 1 family. Opsin subfamily. In terms of processing, phosphorylated on some or all of the serine and threonine residues present in the C-terminal region. Contains one covalently linked retinal chromophore.

The protein resides in the membrane. It is found in the cell projection. It localises to the cilium. Its subcellular location is the photoreceptor outer segment. Its function is as follows. Photoreceptor required for image-forming vision at low light intensity. While most salt water fish species use retinal as chromophore, most freshwater fish use 3-dehydroretinal, or a mixture of retinal and 3-dehydroretinal. Light-induced isomerization of 11-cis to all-trans retinal triggers a conformational change that activates signaling via G-proteins. Subsequent receptor phosphorylation mediates displacement of the bound G-protein alpha subunit by arrestin and terminates signaling. The protein is Rhodopsin (rho) of Tetraodon nigroviridis (Spotted green pufferfish).